The sequence spans 354 residues: Elongation factor Ts (354 aa).

The involved in Mg(2+) ion dislocation from EF-Tu stretch occupies residues 81–84; it reads TDFV.

It belongs to the EF-Ts family.

The protein localises to the cytoplasm. In terms of biological role, associates with the EF-Tu.GDP complex and induces the exchange of GDP to GTP. It remains bound to the aminoacyl-tRNA.EF-Tu.GTP complex up to the GTP hydrolysis stage on the ribosome. In Campylobacter fetus subsp. fetus (strain 82-40), this protein is Elongation factor Ts.